Reading from the N-terminus, the 354-residue chain is tRNA N6-adenosine threonylcarbamoyltransferase (354 aa).

Fe cation contacts are provided by histidine 111 and histidine 115. Substrate-binding positions include 134 to 138, aspartate 167, glycine 180, and asparagine 279; that span reads LVSGG. Aspartate 319 serves as a coordination point for Fe cation.

It belongs to the KAE1 / TsaD family. Fe(2+) is required as a cofactor.

The protein resides in the cytoplasm. The enzyme catalyses L-threonylcarbamoyladenylate + adenosine(37) in tRNA = N(6)-L-threonylcarbamoyladenosine(37) in tRNA + AMP + H(+). Functionally, required for the formation of a threonylcarbamoyl group on adenosine at position 37 (t(6)A37) in tRNAs that read codons beginning with adenine. Is involved in the transfer of the threonylcarbamoyl moiety of threonylcarbamoyl-AMP (TC-AMP) to the N6 group of A37, together with TsaE and TsaB. TsaD likely plays a direct catalytic role in this reaction. The chain is tRNA N6-adenosine threonylcarbamoyltransferase from Neisseria gonorrhoeae (strain ATCC 700825 / FA 1090).